Consider the following 562-residue polypeptide: Probable E3 ubiquitin-protein ligase ARI7 (562 aa).

The disordered stretch occupies residues 1–39 (MDSEEDMLDAHDMESGEDDFYSGGTDDCNDSDDGEPDYG). The span at 27–39 (DCNDSDDGEPDYG) shows a compositional bias: acidic residues. Positions 133–346 (SELTCGICFD…GGFYACNRYE (214 aa)) are TRIAD supradomain. Zn(2+)-binding residues include Cys-137, Cys-140, Cys-154, His-156, Cys-159, Cys-162, Cys-182, Cys-187, Cys-226, Cys-231, Cys-248, Cys-250, Cys-255, Cys-258, His-263, Cys-268, Cys-295, and Cys-298. An RING-type 1 zinc finger spans residues 137 to 187 (CGICFDSYPPEKIASVSCGHPFCTTCWTGYISTTINDGPGCLMLRCPDPSC). The IBR-type zinc-finger motif lies at 206-268 (EKYNRYFLRS…TEEAHRPVDC (63 aa)). An RING-type 2; atypical zinc finger spans residues 295–325 (CPRCKRPIEKNQGCMHMTCTPPCKYEFCWLC). Cys-308 is a catalytic residue. Residues Cys-313, Cys-317, Cys-322, Cys-325, His-332, and Cys-342 each coordinate Zn(2+). The tract at residues 524–562 (ACSSKSTSSKSTGCSSKTRGKGKGSSRTGGSSRNPDDNL) is disordered. Over residues 525-540 (CSSKSTSSKSTGCSSK) the composition is skewed to low complexity.

The protein belongs to the RBR family. Ariadne subfamily. Requires Zn(2+) as cofactor. In terms of tissue distribution, ubiquitous.

The catalysed reaction is [E2 ubiquitin-conjugating enzyme]-S-ubiquitinyl-L-cysteine + [acceptor protein]-L-lysine = [E2 ubiquitin-conjugating enzyme]-L-cysteine + [acceptor protein]-N(6)-ubiquitinyl-L-lysine.. It functions in the pathway protein modification; protein ubiquitination. Might act as an E3 ubiquitin-protein ligase, or as part of E3 complex, which accepts ubiquitin from specific E2 ubiquitin-conjugating enzymes and then transfers it to substrates. This is Probable E3 ubiquitin-protein ligase ARI7 (ARI7) from Arabidopsis thaliana (Mouse-ear cress).